We begin with the raw amino-acid sequence, 575 residues long: MSKQVIEQEVLGQVLGPLADNERLKRESKNLRGTIEQDLEDRITGGFTADNFQLIRFHGMYQQDDRDIRNERTKQKLEPLHNVMLRARMPGGIITPKQWLAIDKFADESTSYGSIRLTTRQTFQFHGVLKPNIKLMHQTLNSIGIDSIATAGDVNRNVLCTTNPVESELHQEAYEWAKKISEHLLPKTRAYAEIWLDGEKLATTDEEPILGSNYLPRKFKTTVVIPPQNDVDVHANDLNFIAIAKDGKLVGFNVLVGGGLAMTHGDTSTYARKADDFGFVPLEKTLDVAAAVVTTQRDWGNRSNRKNAKTKYTLDRVGIDVFKAEVEKRAGVEFAESRPYEFTGRGDRIGWAEGIDGKHHLALFIENGRLLDFPGKALKTGVAEIAKIHKGDFRMTANQNLIVAGVLKSQKAQIEKLARQYGLMDDAVSEQRKNSMACVAFPTCPLAMAEAERFLPEFVTDVEDILKKHGLPEEDNIILRITGCPNGCGRAMLAELGLVGKAPGRYNMHLGGNKAGTRIPKMYKENITSAQILEEIDSLVGRWATERTDNEGFGDFTIRAGIIEEVIISKRDLHA.

[4Fe-4S] cluster contacts are provided by C438, C444, C484, and C488. C488 serves as a coordination point for siroheme.

It belongs to the nitrite and sulfite reductase 4Fe-4S domain family. Alpha(8)-beta(8). The alpha component is a flavoprotein, the beta component is a hemoprotein. Siroheme serves as cofactor. [4Fe-4S] cluster is required as a cofactor.

The enzyme catalyses hydrogen sulfide + 3 NADP(+) + 3 H2O = sulfite + 3 NADPH + 4 H(+). It functions in the pathway sulfur metabolism; hydrogen sulfide biosynthesis; hydrogen sulfide from sulfite (NADPH route): step 1/1. Component of the sulfite reductase complex that catalyzes the 6-electron reduction of sulfite to sulfide. This is one of several activities required for the biosynthesis of L-cysteine from sulfate. This Vibrio atlanticus (strain LGP32) (Vibrio splendidus (strain Mel32)) protein is Sulfite reductase [NADPH] hemoprotein beta-component.